A 172-amino-acid polypeptide reads, in one-letter code: Translation initiation factor IF-3 (172 aa).

This sequence belongs to the IF-3 family. As to quaternary structure, monomer.

It is found in the cytoplasm. Its function is as follows. IF-3 binds to the 30S ribosomal subunit and shifts the equilibrium between 70S ribosomes and their 50S and 30S subunits in favor of the free subunits, thus enhancing the availability of 30S subunits on which protein synthesis initiation begins. The chain is Translation initiation factor IF-3 from Haemophilus influenzae (strain ATCC 51907 / DSM 11121 / KW20 / Rd).